Reading from the N-terminus, the 534-residue chain is Probable inorganic phosphate transporter 1-8 (534 aa).

The Cytoplasmic segment spans residues 1–21 (MPIKVLSSLDVARTQWYHFKA). Residues 22-42 (IIVAGMGLFTDAYDLFCIAPV) form a helical membrane-spanning segment. Residues 43-61 (MKMISHVYYNGDSINTAVL) lie on the Extracellular side of the membrane. The helical transmembrane segment at 62-82 (STSYAIALLGTATGQLVFGYL) threads the bilayer. Residues 83–90 (GDRVGRRR) are Cytoplasmic-facing. A helical transmembrane segment spans residues 91–111 (VYGLCLIIMILSSFGCGFSVC). Residues 112 to 123 (TTRRSCVMVSLG) lie on the Extracellular side of the membrane. A helical transmembrane segment spans residues 124–144 (FFRFFLGLGIGGDYPLSATIM). The Cytoplasmic segment spans residues 145-153 (SEFANKRTR). A helical membrane pass occupies residues 154-174 (GAFIAAVFSMQGLGILVSSAV). Topologically, residues 175–199 (TMAVCVAFKRSGGGLEVDAAAPTEA) are extracellular. Residues 200-220 (DLAWRLILMIGALPAALTFYW) form a helical membrane-spanning segment. Residues 221–281 (RMLMPETARY…KLFSRCFFRL (61 aa)) are Cytoplasmic-facing. A helical membrane pass occupies residues 282–302 (HGRDLFAASFNWFLVDIVFYT). Residues 303–333 (SNLLLSHIFSHYSKKPSTAENVYDAAFEVAE) lie on the Extracellular side of the membrane. The helical transmembrane segment at 334-354 (LGAIIAACSTIPGYWFTVYFI) threads the bilayer. Over 355-361 (DKIGRVK) the chain is Cytoplasmic. Residues 362–382 (IQIMGFFFMAVIYLVAGIPYS) traverse the membrane as a helical segment. The Extracellular segment spans residues 383-396 (WYWSKHEHNNKGFM). Residues 397-417 (VLYGLVFFFCNFGPNTTTFII) traverse the membrane as a helical segment. Residues 418–431 (PAEHFPARFRSTCH) lie on the Cytoplasmic side of the membrane. A helical transmembrane segment spans residues 432–452 (GISGAAGKLGAIVGTVGFLWA). At 453–472 (TKKMESDDKNQIYPEVNRMR) the chain is on the extracellular side. Residues 473 to 493 (IAFLILGGVCIAGILVTYFFT) form a helical membrane-spanning segment. At 494-534 (KETMGRSLEENEHDQDNNAESEDEPQIVDGQSSVSTLLQTR) the chain is on the cytoplasmic side. Residues 501-534 (LEENEHDQDNNAESEDEPQIVDGQSSVSTLLQTR) are disordered. Over residues 510–519 (NNAESEDEPQ) the composition is skewed to acidic residues. At S514 the chain carries Phosphoserine. The span at 522 to 534 (DGQSSVSTLLQTR) shows a compositional bias: polar residues.

Belongs to the major facilitator superfamily. Phosphate:H(+) symporter (TC 2.A.1.9) family. In roots.

Its subcellular location is the membrane. High-affinity transporter for external inorganic phosphate. In Arabidopsis thaliana (Mouse-ear cress), this protein is Probable inorganic phosphate transporter 1-8 (PHT1-8).